A 287-amino-acid polypeptide reads, in one-letter code: Cis-prenyltransferase 7, chloroplastic (287 aa).

The transit peptide at 1–34 (MLSLGFSLPPPSDNKLIITNNNQYNYRTNLANVC) directs the protein to the chloroplast. The active site involves aspartate 61.

The protein belongs to the UPP synthase family. Requires Mg(2+) as cofactor. As to expression, expressed in leaf trichomes and stem trichomes.

Its subcellular location is the plastid. The protein localises to the chloroplast. Functionally, uses geranylgeranyl diphosphate to catalyze the cis-prenyl chain elongation and produce polyprenyl diphosphate with a chain of 35 carbons. This chain is Cis-prenyltransferase 7, chloroplastic, found in Solanum lycopersicum (Tomato).